Reading from the N-terminus, the 470-residue chain is Sorting nexin-17 (470 aa).

The PX domain occupies 1 to 109 (MHFSIPETES…SFLRRAQQET (109 aa)). Positions 36, 38, 62, and 75 each coordinate a 1,2-diacyl-sn-glycero-3-phospho-(1D-myo-inositol-3-phosphate). A Ras-associating domain is found at 115 to 206 (EEVSLEVLLS…YKIVLRKSYW (92 aa)). Residues 115–432 (EEVSLEVLLS…DATRESMVKL (318 aa)) form an FERM-like region. The segment at 270 to 432 (GYLRFDACVA…DATRESMVKL (163 aa)) is PTB-like F3 module. Phosphoserine occurs at positions 336, 407, 409, 415, 421, 437, and 440. The segment at 401–426 (GGTLRRSDSQQAVKSPPLLESPDATR) is disordered. Positions 458 to 470 (GNFAFEGIGDEDL) are interacts with the retriever complex.

The protein belongs to the sorting nexin family. In terms of assembly, monomer. Interacts with APP (via cytoplasmic YXNPXY motif). Interacts with KIF1B. Interacts with the C-termini of P-selectin, PTC, LDLR, VLDLR, LRP1 and LRP8. Interacts with KRIT1 (via N-terminus). Interacts with HRAS. Interacts with ITGB1 and ITGB5 (via NPxY motif). Interacts with CCDC22 and CCDC93; the interaction associates SNX17 with the CCC complex. Interacts (via C-terminus) with VPS26C and VPS35L; the interactions are direct and associate SNX17 with the retriever complex.

The protein resides in the cytoplasm. It is found in the early endosome. Its subcellular location is the cytoplasmic vesicle membrane. In terms of biological role, critical regulator of endosomal recycling of numerous surface proteins, including integrins, signaling receptor and channels. Binds to NPxY sequences in the cytoplasmic tails of target cargos. Associates with retriever and CCC complexes to prevent lysosomal degradation and promote cell surface recycling of numerous cargos such as integrins ITGB1, ITGB5 and their associated alpha subunits. Also required for maintenance of normal cell surface levels of APP and LRP1. Interacts with membranes containing phosphatidylinositol 3-phosphate (PtdIns(3P)). This Homo sapiens (Human) protein is Sorting nexin-17 (SNX17).